A 231-amino-acid chain; its full sequence is Chalcone--flavanone isomerase (231 aa).

Positions 46, 112, and 189 each coordinate substrate.

It belongs to the chalcone isomerase family.

It carries out the reaction a chalcone = a flavanone.. The protein operates within secondary metabolite biosynthesis; flavonoid biosynthesis. Catalyzes the intramolecular cyclization of bicyclic chalcones into tricyclic (S)-flavanones. Responsible for the isomerization of 4,2',4',6'-tetrahydroxychalcone (also termed chalcone) into naringenin. The polypeptide is Chalcone--flavanone isomerase (CHI) (Hordeum vulgare (Barley)).